The sequence spans 124 residues: Small ribosomal subunit protein uS12 (124 aa).

A disordered region spans residues 1–25; that stretch reads MPTFNQLVRNGRKPPRWKTSSPALE. D89 carries the post-translational modification 3-methylthioaspartic acid. The disordered stretch occupies residues 104-124; it reads TAGVANRKQSRSKYGAKRPKS. Residues 111–124 show a composition bias toward basic residues; it reads KQSRSKYGAKRPKS.

The protein belongs to the universal ribosomal protein uS12 family. Part of the 30S ribosomal subunit. Contacts proteins S8 and S17. May interact with IF1 in the 30S initiation complex.

With S4 and S5 plays an important role in translational accuracy. In terms of biological role, interacts with and stabilizes bases of the 16S rRNA that are involved in tRNA selection in the A site and with the mRNA backbone. Located at the interface of the 30S and 50S subunits, it traverses the body of the 30S subunit contacting proteins on the other side and probably holding the rRNA structure together. The combined cluster of proteins S8, S12 and S17 appears to hold together the shoulder and platform of the 30S subunit. This chain is Small ribosomal subunit protein uS12, found in Solibacter usitatus (strain Ellin6076).